Here is a 1734-residue protein sequence, read N- to C-terminus: Gag-pol polyprotein (1734 aa).

The N-myristoyl glycine; by host moiety is linked to residue Gly2. The short motif at 109–112 (PTAP) is the PTAP/PSAP motif element. The segment at 112–217 (PILPSGPSTQ…STTSRAFPLR (106 aa)) is disordered. Positions 128–132 (LYPAF) match the LYPX(n)L motif motif. The PPXY motif motif lies at 161 to 164 (PPPY). Ser191 is modified (phosphoserine; by host). The segment at 344-392 (GRSPTNLAKVKGITQGPNESPSAFLERLKEAYRRYTPYDPEDPGQETNV) is interaction with host PIAS4. The segment at 429-434 (IFNKRE) is interaction with host UBE2I. Composition is skewed to basic and acidic residues over residues 433-474 (RETP…REMS) and 485-498 (RQDR…RPQL). 2 disordered regions span residues 433 to 498 (RETP…RPQL) and 512 to 551 (WAKD…EPRI). The segment at 501–518 (DQCAYCKEKGHWAKDCPK) adopts a CCHC-type zinc-finger fold. Residues 560-630 (VTFLVDTGAQ…CPYPLLGRDL (71 aa)) form the Peptidase A2 domain. The active-site Protease; shared with dimeric partner is the Asp565. Residues 740 to 931 (LDQGILVPCQ…KQVKYLGYLL (192 aa)) form the Reverse transcriptase domain. 7 residues coordinate Mg(2+): Asp808, Asp882, Asp883, Asp1182, Glu1220, Asp1241, and Asp1311. In terms of domain architecture, RNase H type-1 spans 1173–1319 (PDADHTWYTD…ADQAAREAAI (147 aa)). The HHCC-type zinc finger occupies 1386 to 1426 (HRLTHLGYQKMKALLDRGESPYYMLNRDKTLQYVADSCTVC). The Integrase catalytic domain occupies 1443-1601 (RGHRPGTHWE…TPYEILYGAP (159 aa)). Asp1454 and Asp1513 together coordinate Mg(2+).

Homohexamer; further associates as homomultimer. The virus core is composed of a lattice formed from hexagonal rings, each containing six capsid monomers. Interacts with mouse UBE2I and mouse PIAS4. As to quaternary structure, interacts (via PPXY motif) with host NEDD4. Interacts (via PSAP motif) with host TSG101. Interacts (via LYPX(n)L motif) with host PDCD6IP. In terms of assembly, the reverse transcriptase is a monomer (Potential). Interacts (via RNase domains) with host release factor ETF1; this interaction is essential for translational readthrough of amber codon between viral gag and pol genes, as well as for viral replication. Homodimer. The cofactor is Mg(2+). In terms of processing, ubiquitinated by ITCH. Gag can recruit the ubiquitin ligase Itch in an L domain-independent manner to facilitate virus release via a mechanism that involves Gag ubiquitination. Specific enzymatic cleavages by the viral protease yield mature proteins. The protease is released by autocatalytic cleavage. The polyprotein is cleaved during and after budding, this process is termed maturation. Post-translationally, sumoylated; which is required for virus replication. In terms of processing, phosphorylated on serine residues.

The protein localises to the virion. Its subcellular location is the host cell membrane. It is found in the host late endosome membrane. The protein resides in the host endosome. It localises to the host multivesicular body. The protein localises to the host cytoplasm. The enzyme catalyses DNA(n) + a 2'-deoxyribonucleoside 5'-triphosphate = DNA(n+1) + diphosphate. It catalyses the reaction Endonucleolytic cleavage to 5'-phosphomonoester.. With respect to regulation, most efficiently inhibited by Amprenavir, which is able to block Gag-Pol processing in infected cells. In terms of biological role, plays a role in budding and is processed by the viral protease during virion maturation outside the cell. During budding, it recruits, in a PPXY-dependent or independent manner, Nedd4-like ubiquitin ligases that conjugate ubiquitin molecules to Gag-Pol, or to Gag-Pol binding host factors. Interaction with HECT ubiquitin ligases probably links the viral protein to the host ESCRT pathway and facilitates release. Functionally, targets Gag and gag-pol polyproteins to the plasma membrane via a multipartite membrane binding signal, that includes its myristoylated N-terminus. Also mediates nuclear localization of the pre-integration complex. Its function is as follows. Constituent of the pre-integration complex (PIC) which tethers the latter to mitotic chromosomes. This allows the integration of the viral genome into the host DNA. Forms the spherical core of the virion that encapsulates the genomic RNA-nucleocapsid complex. In terms of biological role, involved in the packaging and encapsidation of two copies of the genome. Binds with high affinity to conserved UCUG elements within the packaging signal, located near the 5'-end of the genome. This binding is dependent on genome dimerization. Acts as a nucleic acid chaperone which is involved in rearrangement of nucleic acid secondary structures during gRNA retrotranscription. Functionally, the aspartyl protease mediates proteolytic cleavages of Gag and Gag-Pol polyproteins during or shortly after the release of the virion from the plasma membrane. Cleavages take place as an ordered, step-wise cascade to yield mature proteins. This process is called maturation. Displays maximal activity during the budding process just prior to particle release from the cell (Potential). Cleaves the translation initiation factor eIF4G leading to the inhibition of host cap-dependent translation. Its function is as follows. RT is a multifunctional enzyme that converts the viral dimeric RNA genome into dsDNA in the cytoplasm, shortly after virus entry into the cell. This enzyme displays a DNA polymerase activity that can copy either DNA or RNA templates, and a ribonuclease H (RNase H) activity that cleaves the RNA strand of RNA-DNA heteroduplexes in a partially processive 3' to 5' endonucleasic mode. Conversion of viral genomic RNA into dsDNA requires many steps. A tRNA binds to the primer-binding site (PBS) situated at the 5' end of the viral RNA. RT uses the 3' end of the tRNA primer to perform a short round of RNA-dependent minus-strand DNA synthesis. The reading proceeds through the U5 region and ends after the repeated (R) region which is present at both ends of viral RNA. The portion of the RNA-DNA heteroduplex is digested by the RNase H, resulting in a ssDNA product attached to the tRNA primer. This ssDNA/tRNA hybridizes with the identical R region situated at the 3' end of viral RNA. This template exchange, known as minus-strand DNA strong stop transfer, can be either intra- or intermolecular. RT uses the 3' end of this newly synthesized short ssDNA to perform the RNA-dependent minus-strand DNA synthesis of the whole template. RNase H digests the RNA template except for a polypurine tract (PPT) situated at the 5' end of the genome. It is not clear if both polymerase and RNase H activities are simultaneous. RNase H probably can proceed both in a polymerase-dependent (RNA cut into small fragments by the same RT performing DNA synthesis) and a polymerase-independent mode (cleavage of remaining RNA fragments by free RTs). Secondly, RT performs DNA-directed plus-strand DNA synthesis using the PPT that has not been removed by RNase H as primers. PPT and tRNA primers are then removed by RNase H. The 3' and 5' ssDNA PBS regions hybridize to form a circular dsDNA intermediate. Strand displacement synthesis by RT to the PBS and PPT ends produces a blunt ended, linear dsDNA copy of the viral genome that includes long terminal repeats (LTRs) at both ends. Catalyzes viral DNA integration into the host chromosome, by performing a series of DNA cutting and joining reactions. This enzyme activity takes place after virion entry into a cell and reverse transcription of the RNA genome in dsDNA. The first step in the integration process is 3' processing. This step requires a complex comprising the viral genome, matrix protein and integrase. This complex is called the pre-integration complex (PIC). The integrase protein removes 2 nucleotides from each 3' end of the viral DNA, leaving recessed CA OH's at the 3' ends. In the second step that requires cell division, the PIC enters cell nucleus. In the third step, termed strand transfer, the integrase protein joins the previously processed 3' ends to the 5' ends of strands of target cellular DNA at the site of integration. The last step is viral DNA integration into host chromosome. The sequence is that of Gag-pol polyprotein (gag-pol) from Mus musculus (Mouse).